The sequence spans 79 residues: Small ribosomal subunit protein bS18 (79 aa).

Belongs to the bacterial ribosomal protein bS18 family. Part of the 30S ribosomal subunit. Forms a tight heterodimer with protein bS6.

Binds as a heterodimer with protein bS6 to the central domain of the 16S rRNA, where it helps stabilize the platform of the 30S subunit. The sequence is that of Small ribosomal subunit protein bS18 from Afipia carboxidovorans (strain ATCC 49405 / DSM 1227 / KCTC 32145 / OM5) (Oligotropha carboxidovorans).